Here is a 64-residue protein sequence, read N- to C-terminus: Disintegrin (64 aa).

Positions Asn-1–His-64 constitute a Disintegrin domain. 4 cysteine pairs are disulfide-bonded: Cys-6–Cys-29, Cys-20–Cys-26, Cys-25–Cys-50, and Cys-38–Cys-57. The Cell attachment site; atypical (MLD) motif lies at Met-42–Asp-44.

The protein belongs to the disintegrin family. Dimeric disintegrin subfamily. In terms of assembly, heterodimer; disulfide-linked. As to expression, expressed by the venom gland.

Its subcellular location is the secreted. Its function is as follows. Inhibits adhesion of cells expressing alpha-4/beta-1 (ITGA4/ITGB1) and alpha-4/beta-7 (ITGA4/ITGB7) integrins to the natural ligands vascular cell adhesion molecule 1 (VCAM-1) and mucosal addressin cell adhesion molecule 1 (MADCAM-1). This chain is Disintegrin, found in Echis carinatus (Saw-scaled viper).